The chain runs to 537 residues: uncharacterized protein (537 aa).

6 helical membrane-spanning segments follow: residues 5–25 (IGLG…PWFV), 40–60 (LAVA…FFGW), 63–83 (VLWV…MAVV), 115–135 (GLYY…HLEG), 149–169 (VYLL…WVTL), and 197–217 (VGIV…ALVI).

The protein localises to the plastid. The protein resides in the chloroplast membrane. This is an uncharacterized protein from Ostreococcus tauri.